A 730-amino-acid polypeptide reads, in one-letter code: MTTAVTQATIDGFFDASNGDPFATLGMHETEQGIEIRTLLPDANRMVVIERESGKEITELDCVDERGFFVGVIPNCRQFFAYQLQVFWGNEAQIIEDPYRFHPMIDDLEQWLLSEGSMLRPYEVLGAHFMECDGVSGVNFRLWAPNARRVSIVGDFNYWDGRRHPMRFHPKSGVWELFLPKASLGQLYKFELIDCYGNLRLKADPYAFSSQLRPDTASQISALPNVVEMTEQRRQANQANQPISIYEVHLGSWRRNLENNFWLDYDQIADELIPYVKEMGFTHIEFLPLSEFPFDGSWGYQPLGLYSPTSRFGSPEAFRRLVKRAHEAGINVILDWVPGHFPSDTHGLVAFDGTALYEHEDPREGYHQDWNTLIYNYGRNEVKNFLSSNALYWLERFGVDGIRMDAVASMIYRDYSRAEGEWIPNQYGGRENLEAIEFLKHTNWKIHSEMAGAISIAEESTSFAGVTHPSEDGGLGFNFKWNMGWMNDTLAYMKLDPIYRQYHHNKMTFGMVYQYSENFVLPLSHDEVVHGKYSLLGKMPGDTWQKFANLRAYYGYMWGYPGKKLLFMGNEFAQGREWNYEESLDWFLLDENIGGGWHKGVLKLVKDLNQIYQKNRPLFELDNSPEGFDWLVVDDAANSVFAFERRSSNGERIIVVSNFTPVPRHNYRIGVNVAGKYEEILNTDSMYYEGSNVGNFGCVASEKIESHGRENSISVSIPPLATVYLRLKAK.

Residue Asp405 is the Nucleophile of the active site. Glu458 serves as the catalytic Proton donor.

It belongs to the glycosyl hydrolase 13 family. GlgB subfamily. Monomer.

The catalysed reaction is Transfers a segment of a (1-&gt;4)-alpha-D-glucan chain to a primary hydroxy group in a similar glucan chain.. Its pathway is glycan biosynthesis; glycogen biosynthesis. Its function is as follows. Catalyzes the formation of the alpha-1,6-glucosidic linkages in glycogen by scission of a 1,4-alpha-linked oligosaccharide from growing alpha-1,4-glucan chains and the subsequent attachment of the oligosaccharide to the alpha-1,6 position. The protein is 1,4-alpha-glucan branching enzyme GlgB of Haemophilus influenzae (strain 86-028NP).